The chain runs to 165 residues: Chorismate pyruvate-lyase (165 aa).

4 residues coordinate substrate: M35, R77, L115, and E156.

The protein belongs to the UbiC family. As to quaternary structure, monomer.

The protein resides in the cytoplasm. The enzyme catalyses chorismate = 4-hydroxybenzoate + pyruvate. It participates in cofactor biosynthesis; ubiquinone biosynthesis. In terms of biological role, removes the pyruvyl group from chorismate, with concomitant aromatization of the ring, to provide 4-hydroxybenzoate (4HB) for the ubiquinone pathway. The chain is Chorismate pyruvate-lyase from Citrobacter koseri (strain ATCC BAA-895 / CDC 4225-83 / SGSC4696).